A 352-amino-acid chain; its full sequence is Photosystem II protein D1 (352 aa).

N-acetylthreonine is present on Thr2. Thr2 carries the post-translational modification Phosphothreonine. The next 3 membrane-spanning stretches (helical) occupy residues 29–46 (YIGW…TATS), 118–133 (HFLL…EWEL), and 142–156 (WIAV…AASA). His118 serves as a coordination point for chlorophyll a. Tyr126 lines the pheophytin a pocket. [CaMn4O5] cluster is bound by residues Asp170 and Glu189. Residues 197–218 (FHMLGVAGVFGGSLFSAMHGSL) form a helical membrane-spanning segment. His198 is a binding site for chlorophyll a. Residues His215 and 264-265 (SF) contribute to the a quinone site. His215 lines the Fe cation pocket. Residue His272 coordinates Fe cation. Residues 274–288 (FLAAWPVIGIWFTAL) form a helical membrane-spanning segment. Positions 332, 333, 342, and 344 each coordinate [CaMn4O5] cluster. Residues 345–352 (STNSSSNN) constitute a propeptide that is removed on maturation.

It belongs to the reaction center PufL/M/PsbA/D family. As to quaternary structure, PSII is composed of 1 copy each of membrane proteins PsbA, PsbB, PsbC, PsbD, PsbE, PsbF, PsbH, PsbI, PsbJ, PsbK, PsbL, PsbM, PsbT, PsbX, PsbY, PsbZ, Psb30/Ycf12, at least 3 peripheral proteins of the oxygen-evolving complex and a large number of cofactors. It forms dimeric complexes. It depends on The D1/D2 heterodimer binds P680, chlorophylls that are the primary electron donor of PSII, and subsequent electron acceptors. It shares a non-heme iron and each subunit binds pheophytin, quinone, additional chlorophylls, carotenoids and lipids. D1 provides most of the ligands for the Mn4-Ca-O5 cluster of the oxygen-evolving complex (OEC). There is also a Cl(-1) ion associated with D1 and D2, which is required for oxygen evolution. The PSII complex binds additional chlorophylls, carotenoids and specific lipids. as a cofactor. Tyr-161 forms a radical intermediate that is referred to as redox-active TyrZ, YZ or Y-Z. In terms of processing, C-terminally processed by CTPA; processing is essential to allow assembly of the oxygen-evolving complex and thus photosynthetic growth.

The protein resides in the plastid. Its subcellular location is the chloroplast thylakoid membrane. It carries out the reaction 2 a plastoquinone + 4 hnu + 2 H2O = 2 a plastoquinol + O2. Functionally, this is one of the two reaction center proteins of photosystem II. Its function is as follows. Photosystem II (PSII) is a light-driven water:plastoquinone oxidoreductase that uses light energy to abstract electrons from H(2)O, generating O(2) and a proton gradient subsequently used for ATP formation. It consists of a core antenna complex that captures photons, and an electron transfer chain that converts photonic excitation into a charge separation. The D1/D2 (PsbA/PsbD) reaction center heterodimer binds P680, the primary electron donor of PSII as well as several subsequent electron acceptors. The sequence is that of Photosystem II protein D1 from Chlamydomonas reinhardtii (Chlamydomonas smithii).